Consider the following 238-residue polypeptide: Flagellar L-ring protein (238 aa).

The N-terminal stretch at 1-16 (MNKAILAVAMVLLLAG) is a signal peptide. C17 is lipidated: N-palmitoyl cysteine. The S-diacylglycerol cysteine moiety is linked to residue C17.

Belongs to the FlgH family. As to quaternary structure, the basal body constitutes a major portion of the flagellar organelle and consists of four rings (L,P,S, and M) mounted on a central rod.

It localises to the cell outer membrane. It is found in the bacterial flagellum basal body. Its function is as follows. Assembles around the rod to form the L-ring and probably protects the motor/basal body from shearing forces during rotation. This is Flagellar L-ring protein from Brucella canis (strain ATCC 23365 / NCTC 10854 / RM-666).